The chain runs to 239 residues: Phosphoadenosine 5'-phosphosulfate reductase (239 aa).

Cys-235 (nucleophile; cysteine thiosulfonate intermediate) is an active-site residue.

Belongs to the PAPS reductase family. CysH subfamily.

The protein localises to the cytoplasm. The enzyme catalyses [thioredoxin]-disulfide + sulfite + adenosine 3',5'-bisphosphate + 2 H(+) = [thioredoxin]-dithiol + 3'-phosphoadenylyl sulfate. It functions in the pathway sulfur metabolism; hydrogen sulfide biosynthesis; sulfite from sulfate: step 3/3. Functionally, catalyzes the formation of sulfite from phosphoadenosine 5'-phosphosulfate (PAPS) using thioredoxin as an electron donor. This Thiocapsa roseopersicina protein is Phosphoadenosine 5'-phosphosulfate reductase.